We begin with the raw amino-acid sequence, 353 residues long: Thiamine thiazole synthase 1, chloroplastic (353 aa).

Residues 1–48 constitute a chloroplast transit peptide; that stretch reads MATLTSSICSKPKASVFDPHKSSFHGVPIATQARLSPVKSTPVNLAVT. Substrate-binding positions include A97, 117 to 118, G125, and A190; that span reads EQ. C219 is subject to 2,3-didehydroalanine (Cys). Substrate-binding positions include D221, H236, M288, and 298-300; that span reads RMG.

This sequence belongs to the THI4 family. As to quaternary structure, homooctamer. It depends on Fe cation as a cofactor. Post-translationally, during the catalytic reaction, a sulfide is transferred from Cys-219 to a reaction intermediate, generating a dehydroalanine residue.

Its subcellular location is the plastid. The protein localises to the chloroplast. It carries out the reaction [ADP-thiazole synthase]-L-cysteine + glycine + NAD(+) = [ADP-thiazole synthase]-dehydroalanine + ADP-5-ethyl-4-methylthiazole-2-carboxylate + nicotinamide + 3 H2O + 2 H(+). In terms of biological role, involved in biosynthesis of the thiamine precursor thiazole. Catalyzes the conversion of NAD and glycine to adenosine diphosphate 5-(2-hydroxyethyl)-4-methylthiazole-2-carboxylic acid (ADT), an adenylated thiazole intermediate. The reaction includes an iron-dependent sulfide transfer from a conserved cysteine residue of the protein to a thiazole intermediate. The enzyme can only undergo a single turnover, which suggests it is a suicide enzyme. May have additional roles in adaptation to various stress conditions and in DNA damage tolerance. In Vitis vinifera (Grape), this protein is Thiamine thiazole synthase 1, chloroplastic.